The sequence spans 477 residues: Glycogen synthase (477 aa).

An ADP-alpha-D-glucose-binding site is contributed by Lys15.

It belongs to the glycosyltransferase 1 family. Bacterial/plant glycogen synthase subfamily.

It carries out the reaction [(1-&gt;4)-alpha-D-glucosyl](n) + ADP-alpha-D-glucose = [(1-&gt;4)-alpha-D-glucosyl](n+1) + ADP + H(+). It participates in glycan biosynthesis; glycogen biosynthesis. Its function is as follows. Synthesizes alpha-1,4-glucan chains using ADP-glucose. The sequence is that of Glycogen synthase from Shigella dysenteriae serotype 1 (strain Sd197).